A 316-amino-acid chain; its full sequence is D-alanine--D-alanine ligase (316 aa).

The ATP-grasp domain maps to 109 to 304 (KRLWRGMDLP…FDEMVLQILA (196 aa)). 135–190 (AADLGLPLIVKPAREGSSLGMMKVESIEALQSAYREAVIFDTAVFAERWLPGAEYT) is a binding site for ATP. Mg(2+) contacts are provided by Asp258, Glu271, and Asn273.

Belongs to the D-alanine--D-alanine ligase family. It depends on Mg(2+) as a cofactor. Requires Mn(2+) as cofactor.

It localises to the cytoplasm. The enzyme catalyses 2 D-alanine + ATP = D-alanyl-D-alanine + ADP + phosphate + H(+). It functions in the pathway cell wall biogenesis; peptidoglycan biosynthesis. Functionally, cell wall formation. The sequence is that of D-alanine--D-alanine ligase from Nitrosococcus oceani (strain ATCC 19707 / BCRC 17464 / JCM 30415 / NCIMB 11848 / C-107).